The following is a 119-amino-acid chain: Large ribosomal subunit protein bL20 (119 aa).

Belongs to the bacterial ribosomal protein bL20 family.

Functionally, binds directly to 23S ribosomal RNA and is necessary for the in vitro assembly process of the 50S ribosomal subunit. It is not involved in the protein synthesizing functions of that subunit. The chain is Large ribosomal subunit protein bL20 from Albidiferax ferrireducens (strain ATCC BAA-621 / DSM 15236 / T118) (Rhodoferax ferrireducens).